Here is a 113-residue protein sequence, read N- to C-terminus: Hydrogenase maturation factor HypA (113 aa).

Histidine 2 lines the Ni(2+) pocket. Zn(2+) is bound by residues cysteine 73, cysteine 76, cysteine 89, and cysteine 92.

It belongs to the HypA/HybF family.

In terms of biological role, involved in the maturation of [NiFe] hydrogenases. Required for nickel insertion into the metal center of the hydrogenase. This Prosthecochloris aestuarii (strain DSM 271 / SK 413) protein is Hydrogenase maturation factor HypA.